The sequence spans 627 residues: (+)-sabinene synthase, chloroplastic (627 aa).

The N-terminal 46 residues, Met-1–Met-46, are a transit peptide targeting the chloroplast. Positions 378, 382, and 530 each coordinate Mg(2+). The short motif at Asp-378–Asp-382 is the DDXXD motif element.

The protein belongs to the terpene synthase family. Tpsd subfamily. In terms of assembly, monomer. Mg(2+) serves as cofactor.

It is found in the plastid. It localises to the chloroplast. It carries out the reaction (2E)-geranyl diphosphate = (1R,5R)-sabinene + diphosphate. Its pathway is terpene metabolism; oleoresin biosynthesis. In terms of biological role, terpene synthase (TPS) involved in defensive oleoresin formation in conifers in response to insect attack (e.g. white pine weevil P.strobi) or other injury. Produces (+)-sabinene from geranyl diphosphate, but has no activity with geranylgeranyl diphosphate or farnesyl diphosphate. This chain is (+)-sabinene synthase, chloroplastic (TPS-sab), found in Picea sitchensis (Sitka spruce).